The chain runs to 330 residues: Ketol-acid reductoisomerase (NADP(+)) (330 aa).

In terms of domain architecture, KARI N-terminal Rossmann spans 2-182 (ARMYYDEDAN…GGTRAGVLET (181 aa)). Residues 25-28 (YGSQ), Ser51, Ser53, and 83-86 (DEVQ) contribute to the NADP(+) site. The active site involves His108. Gly134 is an NADP(+) binding site. A KARI C-terminal knotted domain is found at 183–328 (TFREETETDL…QDLRAMMSWL (146 aa)). The Mg(2+) site is built by Asp191, Glu195, Glu227, and Glu231. A substrate-binding site is contributed by Ser252.

The protein belongs to the ketol-acid reductoisomerase family. It depends on Mg(2+) as a cofactor.

It carries out the reaction (2R)-2,3-dihydroxy-3-methylbutanoate + NADP(+) = (2S)-2-acetolactate + NADPH + H(+). The catalysed reaction is (2R,3R)-2,3-dihydroxy-3-methylpentanoate + NADP(+) = (S)-2-ethyl-2-hydroxy-3-oxobutanoate + NADPH + H(+). Its pathway is amino-acid biosynthesis; L-isoleucine biosynthesis; L-isoleucine from 2-oxobutanoate: step 2/4. The protein operates within amino-acid biosynthesis; L-valine biosynthesis; L-valine from pyruvate: step 2/4. Its function is as follows. Involved in the biosynthesis of branched-chain amino acids (BCAA). Catalyzes an alkyl-migration followed by a ketol-acid reduction of (S)-2-acetolactate (S2AL) to yield (R)-2,3-dihydroxy-isovalerate. In the isomerase reaction, S2AL is rearranged via a Mg-dependent methyl migration to produce 3-hydroxy-3-methyl-2-ketobutyrate (HMKB). In the reductase reaction, this 2-ketoacid undergoes a metal-dependent reduction by NADPH to yield (R)-2,3-dihydroxy-isovalerate. In Microcystis aeruginosa (strain NIES-843 / IAM M-2473), this protein is Ketol-acid reductoisomerase (NADP(+)).